Reading from the N-terminus, the 261-residue chain is Rhomboid-type serine protease 2 (261 aa).

The next 5 membrane-spanning stretches (helical) occupy residues 17–37, 58–78, 94–114, 116–136, and 155–175; these read LTAGLSVFLTLVYVLNWVFPI, LYPLAHLSIFHLLLNLMSLFV, ITLNLLAIVTGVVYCLVGMLL, PNVYVGGASGWCFTLCGYFAV, and LYIPLVFLVLVTLLMPGSSFV. The Nucleophile role is filled by serine 124. The active site involves histidine 177.

The protein belongs to the peptidase S54 family.

It localises to the golgi apparatus membrane. It is found in the golgi apparatus. The protein resides in the cis-Golgi network membrane. It carries out the reaction Cleaves type-1 transmembrane domains using a catalytic dyad composed of serine and histidine that are contributed by different transmembrane domains.. Probable rhomboid-type serine protease that catalyzes intramembrane proteolysis. This chain is Rhomboid-type serine protease 2 (RBD2), found in Eremothecium gossypii (strain ATCC 10895 / CBS 109.51 / FGSC 9923 / NRRL Y-1056) (Yeast).